The sequence spans 100 residues: Aspartyl/glutamyl-tRNA(Asn/Gln) amidotransferase subunit C (100 aa).

The protein belongs to the GatC family. As to quaternary structure, heterotrimer of A, B and C subunits.

The catalysed reaction is L-glutamyl-tRNA(Gln) + L-glutamine + ATP + H2O = L-glutaminyl-tRNA(Gln) + L-glutamate + ADP + phosphate + H(+). It catalyses the reaction L-aspartyl-tRNA(Asn) + L-glutamine + ATP + H2O = L-asparaginyl-tRNA(Asn) + L-glutamate + ADP + phosphate + 2 H(+). Its function is as follows. Allows the formation of correctly charged Asn-tRNA(Asn) or Gln-tRNA(Gln) through the transamidation of misacylated Asp-tRNA(Asn) or Glu-tRNA(Gln) in organisms which lack either or both of asparaginyl-tRNA or glutaminyl-tRNA synthetases. The reaction takes place in the presence of glutamine and ATP through an activated phospho-Asp-tRNA(Asn) or phospho-Glu-tRNA(Gln). This is Aspartyl/glutamyl-tRNA(Asn/Gln) amidotransferase subunit C from Erythrobacter litoralis (strain HTCC2594).